The sequence spans 280 residues: Energy-coupling factor transporter ATP-binding protein EcfA (280 aa).

The region spanning 5–240 is the ABC transporter domain; sequence IDVKNLTYKY…DEMLKLTGLE (236 aa). Residue 40–47 coordinates ATP; sequence GHNGSGKS.

Belongs to the ABC transporter superfamily. Energy-coupling factor EcfA family. Forms a stable energy-coupling factor (ECF) transporter complex composed of 2 membrane-embedded substrate-binding proteins (S component), 2 ATP-binding proteins (A component) and 2 transmembrane proteins (T component).

The protein resides in the cell membrane. ATP-binding (A) component of a common energy-coupling factor (ECF) ABC-transporter complex. Unlike classic ABC transporters this ECF transporter provides the energy necessary to transport a number of different substrates. This is Energy-coupling factor transporter ATP-binding protein EcfA from Pediococcus pentosaceus (strain ATCC 25745 / CCUG 21536 / LMG 10740 / 183-1w).